Here is a 404-residue protein sequence, read N- to C-terminus: Starvation-sensing protein RspA (404 aa).

The protein belongs to the mandelate racemase/muconate lactonizing enzyme family.

Its function is as follows. Probably involved in the degradation of homoserine lactone (HSL) or of a metabolite of HSL that signals starvation. The sequence is that of Starvation-sensing protein RspA from Escherichia coli (strain K12).